A 1048-amino-acid chain; its full sequence is Putative helicase/primase complex protein (1048 aa).

Residues Ser1025 to Thr1048 form a disordered region.

This sequence belongs to the asfivirus F1055L family.

Functionally, may be involved in DNA replication. The chain is Putative helicase/primase complex protein from African swine fever virus (isolate Pig/Kenya/KEN-50/1950) (ASFV).